The chain runs to 328 residues: Interleukin-12 subunit beta (328 aa).

A signal peptide spans 1 to 22 (MCHQQLVISWFSLVFLASPLMA). Residues 29-106 (DVYVVELDWY…LSHSLLLLHK (78 aa)) form the Ig-like C2-type domain. Cys-50 and Cys-90 form a disulfide bridge. N-linked (GlcNAc...) asparagine glycans are attached at residues Asn-125, Asn-135, Asn-222, and Asn-303. The region spanning 237–328 (PPKNLQLKPL…WSEWASVPCS (92 aa)) is the Fibronectin type-III domain.

The protein belongs to the IL-12B family. Heterodimer with IL12A; disulfide-linked. The heterodimer is known as interleukin IL-12. Heterodimer with IL23A; disulfide-linked. The heterodimer is known as interleukin IL-23. Also secreted as a monomer. Interacts with NBR1; this interaction promotes IL-12 secretion.

The protein localises to the secreted. Functionally, cytokine that can act as a growth factor for activated T and NK cells, enhance the lytic activity of NK/lymphokine-activated killer cells, and stimulate the production of IFN-gamma by resting PBMC. Associates with IL23A to form the IL-23 interleukin, a heterodimeric cytokine which functions in innate and adaptive immunity. IL-23 may constitute with IL-17 an acute response to infection in peripheral tissues. IL-23 binds to a heterodimeric receptor complex composed of IL12RB1 and IL23R, activates the Jak-Stat signaling cascade, stimulates memory rather than naive T-cells and promotes production of pro-inflammatory cytokines. IL-23 induces autoimmune inflammation and thus may be responsible for autoimmune inflammatory diseases and may be important for tumorigenesis. The protein is Interleukin-12 subunit beta (IL12B) of Papio anubis (Olive baboon).